A 505-amino-acid chain; its full sequence is Deoxyguanosinetriphosphate triphosphohydrolase (505 aa).

An HD domain is found at Arg66 to Cys273.

It belongs to the dGTPase family. Type 1 subfamily. Homotetramer. Mg(2+) is required as a cofactor.

It carries out the reaction dGTP + H2O = 2'-deoxyguanosine + triphosphate + H(+). Functionally, dGTPase preferentially hydrolyzes dGTP over the other canonical NTPs. This Shigella flexneri protein is Deoxyguanosinetriphosphate triphosphohydrolase.